We begin with the raw amino-acid sequence, 360 residues long: Phospho-N-acetylmuramoyl-pentapeptide-transferase (360 aa).

Helical transmembrane passes span 25-45, 73-93, 97-117, 134-154, 168-188, 199-219, 236-256, 263-283, 288-308, and 338-358; these read RGIL…PWMI, TMGG…WADL, YVWV…VDDY, YFWQ…TAPT, LAIP…VGSS, GLAI…CYLS, AGEL…FLWF, VFMG…IAVI, VVLF…VIQV, and VIVR…ATLK.

It belongs to the glycosyltransferase 4 family. MraY subfamily. Mg(2+) serves as cofactor.

The protein localises to the cell inner membrane. The enzyme catalyses UDP-N-acetyl-alpha-D-muramoyl-L-alanyl-gamma-D-glutamyl-meso-2,6-diaminopimeloyl-D-alanyl-D-alanine + di-trans,octa-cis-undecaprenyl phosphate = di-trans,octa-cis-undecaprenyl diphospho-N-acetyl-alpha-D-muramoyl-L-alanyl-D-glutamyl-meso-2,6-diaminopimeloyl-D-alanyl-D-alanine + UMP. The protein operates within cell wall biogenesis; peptidoglycan biosynthesis. Catalyzes the initial step of the lipid cycle reactions in the biosynthesis of the cell wall peptidoglycan: transfers peptidoglycan precursor phospho-MurNAc-pentapeptide from UDP-MurNAc-pentapeptide onto the lipid carrier undecaprenyl phosphate, yielding undecaprenyl-pyrophosphoryl-MurNAc-pentapeptide, known as lipid I. In Pseudomonas entomophila (strain L48), this protein is Phospho-N-acetylmuramoyl-pentapeptide-transferase.